A 437-amino-acid chain; its full sequence is Amino-acid acetyltransferase (437 aa).

The region spanning 289–429 (ENIRLATSFD…EHYNYQRMSK (141 aa)) is the N-acetyltransferase domain.

This sequence belongs to the acetyltransferase family. ArgA subfamily.

It localises to the cytoplasm. The enzyme catalyses L-glutamate + acetyl-CoA = N-acetyl-L-glutamate + CoA + H(+). Its pathway is amino-acid biosynthesis; L-arginine biosynthesis; N(2)-acetyl-L-ornithine from L-glutamate: step 1/4. The polypeptide is Amino-acid acetyltransferase (Actinobacillus pleuropneumoniae serotype 7 (strain AP76)).